Consider the following 87-residue polypeptide: Toxin CsEv2 (87 aa).

The first 19 residues, Met-1–Ala-19, serve as a signal peptide directing secretion. The LCN-type CS-alpha/beta domain maps to Lys-20 to Ser-85. Disulfide bonds link Cys-31-Cys-84, Cys-35-Cys-60, Cys-44-Cys-65, and Cys-48-Cys-67.

Belongs to the long (4 C-C) scorpion toxin superfamily. Sodium channel inhibitor family. Beta subfamily. In terms of tissue distribution, expressed by the venom gland.

It localises to the secreted. Beta toxins bind voltage-independently at site-4 of sodium channels (Nav) and shift the voltage of activation toward more negative potentials thereby affecting sodium channel activation and promoting spontaneous and repetitive firing. Induces immediate paralysis in crickets after injection, with a total paralysis occurring within 15-30 minutes and lasting for 1-2 hours. Is also lethal to vertebrate (chicks) when injected in very high dosages (more that 100 mg/kg). This Centruroides sculpturatus (Arizona bark scorpion) protein is Toxin CsEv2.